A 101-amino-acid chain; its full sequence is Protein translation factor SUI1 homolog (101 aa).

This sequence belongs to the SUI1 family.

This is Protein translation factor SUI1 homolog from Methanothermobacter thermautotrophicus (strain ATCC 29096 / DSM 1053 / JCM 10044 / NBRC 100330 / Delta H) (Methanobacterium thermoautotrophicum).